The sequence spans 419 residues: Capsule polysaccharide modification protein LipB (419 aa).

It localises to the cell inner membrane. Involved in the phospholipid modification of the capsular polysaccharide, a strong requirement for its translocation to the cell surface. This chain is Capsule polysaccharide modification protein LipB (lipB), found in Neisseria meningitidis serogroup B (strain ATCC BAA-335 / MC58).